The primary structure comprises 30 residues: MERQNVQQQRGKDQRPQRPGASNPRRPNQR.

The tract at residues M1 to R30 is disordered.

In terms of biological role, might be involved in DNA-binding; the protein binds DNA in gel-shift assays and immunogold electron microscopy shows labelling of condensed chromatin. In Coxiella burnetii (strain RSA 493 / Nine Mile phase I), this protein is Protein ScvA (scvA).